The primary structure comprises 700 residues: Probable pre-mRNA-splicing factor ATP-dependent RNA helicase DEAH4 (700 aa).

The residue at position 2 (A2) is an N-acetylalanine. A Helicase ATP-binding domain is found at 14 to 178 (VETVEKNSVV…FSGCPVLNVP (165 aa)). An ATP-binding site is contributed by 27–34 (GETGSGKS). The DEAH box motif lies at 124 to 127 (DEAH). The region spanning 200-377 (SLKVAIDIHV…GSVLYLKSLD (178 aa)) is the Helicase C-terminal domain. 2 disordered regions span residues 463–486 (PARS…NGSG) and 654–682 (GPAP…SENV).

Belongs to the DEAD box helicase family. DEAH subfamily. PRP22 sub-subfamily.

The catalysed reaction is ATP + H2O = ADP + phosphate + H(+). Functionally, may be involved in pre-mRNA splicing. The protein is Probable pre-mRNA-splicing factor ATP-dependent RNA helicase DEAH4 of Arabidopsis thaliana (Mouse-ear cress).